Here is a 1048-residue protein sequence, read N- to C-terminus: Anguibactin system regulator (1048 aa).

Residues Pro-965–Arg-1039 form the Carrier domain.

Belongs to the ATP-dependent AMP-binding enzyme family.

Its pathway is siderophore biosynthesis; anguibactin biosynthesis. Functionally, bifunctional protein that plays an essential role in virulence. Plays a role in both the production of the siderophore anguibactin and the regulation of iron transport genes. The chain is Anguibactin system regulator (angR) from Vibrio anguillarum (Listonella anguillarum).